We begin with the raw amino-acid sequence, 278 residues long: Orotidine 5'-phosphate decarboxylase (278 aa).

The active-site Proton donor is the Lys-95.

Belongs to the OMP decarboxylase family. Type 2 subfamily.

It carries out the reaction orotidine 5'-phosphate + H(+) = UMP + CO2. The protein operates within pyrimidine metabolism; UMP biosynthesis via de novo pathway; UMP from orotate: step 2/2. The polypeptide is Orotidine 5'-phosphate decarboxylase (Methylibium petroleiphilum (strain ATCC BAA-1232 / LMG 22953 / PM1)).